The sequence spans 248 residues: Large ribosomal subunit protein uL30 (248 aa).

Residue Met-1 is modified to N-acetylmethionine. A run of 4 repeats spans residues 7-18 (KKKKVPAVPETL), 19-30 (KKKRKNFAELKI), 31-42 (KRLRKKFAQKML), and 43-54 (RKARRKLIYEKA). Residues 7–54 (KKKKVPAVPETLKKKRKNFAELKIKRLRKKFAQKMLRKARRKLIYEKA) form a 4 X 12 AA tandem repeats region. Thr-17 carries the phosphothreonine modification. Lys-124 is subject to N6-acetyllysine. The residue at position 127 (Lys-127) is an N6-succinyllysine. Tyr-139 bears the Phosphotyrosine mark.

It belongs to the universal ribosomal protein uL30 family. In terms of assembly, component of the large ribosomal subunit. Homodimer. Interacts with DHX33.

The protein localises to the cytoplasm. In terms of biological role, component of the large ribosomal subunit. The ribosome is a large ribonucleoprotein complex responsible for the synthesis of proteins in the cell. Binds to G-rich structures in 28S rRNA and in mRNAs. Plays a regulatory role in the translation apparatus; inhibits cell-free translation of mRNAs. In Bos taurus (Bovine), this protein is Large ribosomal subunit protein uL30 (RPL7).